Consider the following 490-residue polypeptide: Serine/threonine-protein kinase BSK6 (490 aa).

Residue Gly2 is the site of N-myristoyl glycine attachment. Phosphoserine is present on Ser25. The region spanning 56-310 (DNIVSEHGEK…KSLVTSLVTL (255 aa)) is the Protein kinase domain. ATP is bound by residues 62-70 (HGEKAPNVV) and Lys84. The Proton acceptor role is filled by Asp178. At Ser373 the chain carries Phosphoserine.

Belongs to the protein kinase superfamily. Ser/Thr protein kinase family. As to quaternary structure, interacts with BRI1, ASK7/BIN2, ASK9/BIL2, BSK1, BSK5, BSK8 and BSK11. Post-translationally, phosphorylated by BRI1, ASK7/BIN2 and ASK9/BIL2.

It is found in the cell membrane. It catalyses the reaction L-seryl-[protein] + ATP = O-phospho-L-seryl-[protein] + ADP + H(+). The enzyme catalyses L-threonyl-[protein] + ATP = O-phospho-L-threonyl-[protein] + ADP + H(+). In terms of biological role, probable serine/threonine kinase that acts as a positive regulator of brassinosteroid (BR) signaling downstream of the receptor kinase BRI1. Functions redundantly with BSK3, BSK4, BSK7 and BSK8. In Arabidopsis thaliana (Mouse-ear cress), this protein is Serine/threonine-protein kinase BSK6.